We begin with the raw amino-acid sequence, 875 residues long: Alanine--tRNA ligase (875 aa).

The Zn(2+) site is built by H564, H568, C666, and H670.

Belongs to the class-II aminoacyl-tRNA synthetase family. As to quaternary structure, homotetramer. The cofactor is Zn(2+).

The protein resides in the cytoplasm. It carries out the reaction tRNA(Ala) + L-alanine + ATP = L-alanyl-tRNA(Ala) + AMP + diphosphate. In terms of biological role, catalyzes the attachment of alanine to tRNA(Ala) in a two-step reaction: alanine is first activated by ATP to form Ala-AMP and then transferred to the acceptor end of tRNA(Ala). Also edits incorrectly charged Ser-tRNA(Ala) and Gly-tRNA(Ala) via its editing domain. The sequence is that of Alanine--tRNA ligase from Citrobacter koseri (strain ATCC BAA-895 / CDC 4225-83 / SGSC4696).